The sequence spans 596 residues: Elongation factor 4 (596 aa).

The tr-type G domain occupies 2–183 (KNIRNFSIIA…TIITKIPAPK (182 aa)). Residues 14–19 (DHGKST) and 130–133 (NKID) each bind GTP.

This sequence belongs to the TRAFAC class translation factor GTPase superfamily. Classic translation factor GTPase family. LepA subfamily.

The protein resides in the cell inner membrane. The enzyme catalyses GTP + H2O = GDP + phosphate + H(+). Required for accurate and efficient protein synthesis under certain stress conditions. May act as a fidelity factor of the translation reaction, by catalyzing a one-codon backward translocation of tRNAs on improperly translocated ribosomes. Back-translocation proceeds from a post-translocation (POST) complex to a pre-translocation (PRE) complex, thus giving elongation factor G a second chance to translocate the tRNAs correctly. Binds to ribosomes in a GTP-dependent manner. The polypeptide is Elongation factor 4 (Campylobacter lari (strain RM2100 / D67 / ATCC BAA-1060)).